The chain runs to 388 residues: uncharacterized protein (388 aa).

Helical transmembrane passes span 18-38 (AAMF…PLYV), 42-62 (LHLS…ATLL), 89-111 (ASGL…WAIL), 116-136 (VLLG…GMWL), 145-165 (VISW…PLGL), 171-191 (AGLA…SGVI), 219-239 (TGLV…ALWF), 248-268 (GFAM…CAKF), 287-307 (TGLA…GAAI), 341-361 (AFQD…TPFI), and 365-385 (QVFL…HLLL).

This sequence belongs to the major facilitator superfamily. YfcJ family.

It localises to the cell inner membrane. This is an uncharacterized protein from Salmonella typhimurium (strain LT2 / SGSC1412 / ATCC 700720).